Reading from the N-terminus, the 145-residue chain is D-aminoacyl-tRNA deacylase (145 aa).

The Gly-cisPro motif, important for rejection of L-amino acids motif lies at 137-138 (GP).

This sequence belongs to the DTD family. In terms of assembly, homodimer.

It is found in the cytoplasm. It carries out the reaction glycyl-tRNA(Ala) + H2O = tRNA(Ala) + glycine + H(+). It catalyses the reaction a D-aminoacyl-tRNA + H2O = a tRNA + a D-alpha-amino acid + H(+). In terms of biological role, an aminoacyl-tRNA editing enzyme that deacylates mischarged D-aminoacyl-tRNAs. Also deacylates mischarged glycyl-tRNA(Ala), protecting cells against glycine mischarging by AlaRS. Acts via tRNA-based rather than protein-based catalysis; rejects L-amino acids rather than detecting D-amino acids in the active site. By recycling D-aminoacyl-tRNA to D-amino acids and free tRNA molecules, this enzyme counteracts the toxicity associated with the formation of D-aminoacyl-tRNA entities in vivo and helps enforce protein L-homochirality. This is D-aminoacyl-tRNA deacylase from Klebsiella pneumoniae subsp. pneumoniae (strain ATCC 700721 / MGH 78578).